The following is a 188-amino-acid chain: dCTP deaminase (188 aa).

DCTP-binding positions include 111–116, 135–137, glutamine 156, tyrosine 170, and glutamine 180; these read KSTYAR and TLE. The Proton donor/acceptor role is filled by glutamate 137.

Belongs to the dCTP deaminase family. Homotrimer.

It catalyses the reaction dCTP + H2O + H(+) = dUTP + NH4(+). It participates in pyrimidine metabolism; dUMP biosynthesis; dUMP from dCTP (dUTP route): step 1/2. Catalyzes the deamination of dCTP to dUTP. The sequence is that of dCTP deaminase from Legionella pneumophila (strain Paris).